A 131-amino-acid polypeptide reads, in one-letter code: Profilin-2 (131 aa).

Cysteines 13 and 115 form a disulfide. Residues 81–97 (AVIRGKKGSGGITVKKT) carry the Involved in PIP2 interaction motif. Position 111 is a phosphothreonine (threonine 111).

Belongs to the profilin family. Occurs in many kinds of cells as a complex with monomeric actin in a 1:1 ratio. Post-translationally, phosphorylated by MAP kinases. As to expression, pollen specific.

It is found in the cytoplasm. The protein localises to the cytoskeleton. Its function is as follows. Binds to actin and affects the structure of the cytoskeleton. At high concentrations, profilin prevents the polymerization of actin, whereas it enhances it at low concentrations. By binding to PIP2, it inhibits the formation of IP3 and DG. This chain is Profilin-2 (PRO2), found in Zea mays (Maize).